The chain runs to 584 residues: (+)-larreatricin hydroxylase, chloroplastic (584 aa).

The N-terminal 32 residues, 1 to 32 (MASLSSQSKLLATPYSFPYHTKPSRVSLRRVS), are a transit peptide targeting the chloroplast. The transit peptide at 33–79 (CKASNDNKDKPNDQEKTFSIDRRNMLIGLGGLYGASNVFPSNQSTLA) directs the protein to the thylakoid. Intrachain disulfides connect cysteine 91–cysteine 106 and cysteine 105–cysteine 168. 6 residues coordinate Cu cation: histidine 167, histidine 188, histidine 197, histidine 319, histidine 323, and histidine 353. The 2'-(S-cysteinyl)-histidine (Cys-His) cross-link spans 171 to 188 (CNGAYDQVGFPDVNIQVH). Positions 432–584 (RLRSKATTTT…KIEFVRDEED (153 aa)) are cleaved as a propeptide — removed in mature form.

The protein belongs to the tyrosinase family. Requires Cu(2+) as cofactor.

It is found in the plastid. The protein resides in the chloroplast thylakoid lumen. The enzyme catalyses (+)-larreatricin + AH2 + O2 = (+)-3'-hydroxylarreatricin + A + H2O. Enantio-specific polyphenol oxidase involved in aromatic ring hydroxylation. Involved in the biosynthesis of the creosote bush 8-8' linked lignans. Has a strong preference for the 3' position of (+)-larreatricin. The sequence is that of (+)-larreatricin hydroxylase, chloroplastic from Larrea tridentata (Creosote bush).